A 180-amino-acid chain; its full sequence is Isopentenyl-diphosphate Delta-isomerase (180 aa).

Mn(2+) contacts are provided by His22 and His28. The 135-residue stretch at 26–160 folds into the Nudix hydrolase domain; that stretch reads LKHKAVSVFA…PERFTPWLKI (135 aa). The active site involves Cys62. Residue Cys62 coordinates Mg(2+). His64 provides a ligand contact to Mn(2+). Glu82 is a Mg(2+) binding site. Residues Glu108 and Glu110 each coordinate Mn(2+). Glu110 is a catalytic residue.

Belongs to the IPP isomerase type 1 family. Mg(2+) is required as a cofactor. Mn(2+) serves as cofactor.

The protein resides in the cytoplasm. It catalyses the reaction isopentenyl diphosphate = dimethylallyl diphosphate. It participates in isoprenoid biosynthesis; dimethylallyl diphosphate biosynthesis; dimethylallyl diphosphate from isopentenyl diphosphate: step 1/1. In terms of biological role, catalyzes the 1,3-allylic rearrangement of the homoallylic substrate isopentenyl (IPP) to its highly electrophilic allylic isomer, dimethylallyl diphosphate (DMAPP). The polypeptide is Isopentenyl-diphosphate Delta-isomerase (Ruegeria pomeroyi (strain ATCC 700808 / DSM 15171 / DSS-3) (Silicibacter pomeroyi)).